A 405-amino-acid polypeptide reads, in one-letter code: Argininosuccinate synthase (405 aa).

11 to 19 contributes to the ATP binding site; the sequence is AYSGGLDTS. Residue Tyr-90 participates in L-citrulline binding. Gly-119 serves as a coordination point for ATP. L-aspartate contacts are provided by Thr-121, Asn-125, and Asp-126. Position 125 (Asn-125) interacts with L-citrulline. Positions 129, 178, 187, 263, and 275 each coordinate L-citrulline.

Belongs to the argininosuccinate synthase family. Type 1 subfamily. As to quaternary structure, homotetramer.

Its subcellular location is the cytoplasm. The enzyme catalyses L-citrulline + L-aspartate + ATP = 2-(N(omega)-L-arginino)succinate + AMP + diphosphate + H(+). Its pathway is amino-acid biosynthesis; L-arginine biosynthesis; L-arginine from L-ornithine and carbamoyl phosphate: step 2/3. The chain is Argininosuccinate synthase from Legionella pneumophila (strain Paris).